We begin with the raw amino-acid sequence, 317 residues long: Transaldolase 1 (317 aa).

The Schiff-base intermediate with substrate role is filled by Lys-132.

This sequence belongs to the transaldolase family. Type 1 subfamily. As to quaternary structure, homodimer.

The protein localises to the cytoplasm. The catalysed reaction is D-sedoheptulose 7-phosphate + D-glyceraldehyde 3-phosphate = D-erythrose 4-phosphate + beta-D-fructose 6-phosphate. The protein operates within carbohydrate degradation; pentose phosphate pathway; D-glyceraldehyde 3-phosphate and beta-D-fructose 6-phosphate from D-ribose 5-phosphate and D-xylulose 5-phosphate (non-oxidative stage): step 2/3. Transaldolase is important for the balance of metabolites in the pentose-phosphate pathway. In Salmonella paratyphi A (strain ATCC 9150 / SARB42), this protein is Transaldolase 1.